The primary structure comprises 686 residues: Epsin (686 aa).

In terms of domain architecture, ENTH spans 14 to 145 (DAVLNTPEIE…QDDQRIKEER (132 aa)). Disordered stretches follow at residues 177-417 (YDSD…FNNN) and 463-571 (NSSM…TMRP). Positions 185–211 (NQRDSYGGNQRDSYGGNQRDSYGGNQR) are enriched in polar residues. Over residues 212 to 225 (ETTRRDSFNGRDEG) the composition is skewed to basic and acidic residues. The span at 237-256 (SYDSDPYSNTRAEYENYSNR) shows a compositional bias: polar residues. Composition is skewed to low complexity over residues 269 to 340 (SNNS…SGPS) and 383 to 417 (NNTN…FNNN). Polar residues predominate over residues 491–503 (FDQQSGDFSNKND). Over residues 504-521 (GQQKPKDTNDPWSKKDLF) the composition is skewed to basic and acidic residues. Residues 527-547 (GNQNPNQSPVNNTNNNNNGNT) show a composition bias toward low complexity. A compositionally biased stretch (polar residues) spans 558–567 (PITSAGSTIP).

This sequence belongs to the epsin family.

It is found in the membrane. The protein resides in the clathrin-coated pit. Binds to membranes enriched in phosphatidylinositol 4,5-bisphosphate (PtdIns(4,5)P2). The polypeptide is Epsin (epnA) (Dictyostelium discoideum (Social amoeba)).